A 337-amino-acid chain; its full sequence is MEEELKSFVKVWGSAIISVSYCYYIPSKIKRGVHRLLSVLPVCVLFLVLPLFFVFTIFSSTTAFCLSILANFKLILFAFDKGPLLPLPTNLFRFICFTCLPIKLQTKPNSQNHLPKWVLPSKVAIFVLLLNIRSYKILLPPILLLGLYPLHLYIVLDVLLTIVNALLTIILRCDLEPHFNEPYLATSLQDFWGHRWNLMVSAIYRPGVYSPVRSVCQHQMRSDWARFMGCMTTFFVSGLIHELVYFYINREKPTLEVTWFFVLHGVCTAMEIAVKRKMQWSLSPMLLRLITVGFLVVTGDLLFFGQIERSNMLERRANEASLFIDFVKRKVFNYTVS.

The next 8 helical transmembrane spans lie at 7 to 27, 38 to 58, 59 to 79, 82 to 102, 142 to 162, 228 to 248, 254 to 274, and 285 to 305; these read SFVKVWGSAIISVSYCYYIPS, SVLPVCVLFLVLPLFFVFTIF, SSTTAFCLSILANFKLILFAF, GPLLPLPTNLFRFICFTCLPI, ILLLGLYPLHLYIVLDVLLTI, MGCMTTFFVSGLIHELVYFYI, TLEVTWFFVLHGVCTAMEIAV, and MLLRLITVGFLVVTGDLLFFG.

This sequence belongs to the wax synthase family.

It localises to the membrane. The catalysed reaction is a long chain fatty alcohol + a fatty acyl-CoA = a wax ester + CoA. Functionally, catalyzes the final step in the synthesis of long-chain linear esters (waxes). This is Putative long-chain-alcohol O-fatty-acyltransferase 10 from Arabidopsis thaliana (Mouse-ear cress).